The chain runs to 484 residues: Auxin transporter-like protein 2 (484 aa).

Over 1 to 59 (MLPQKQGEEAIVSSFNETDQQEGVVGREEEVEDHSFSVKNFLWHGGSVWDAWFSCASNQ) the chain is Cytoplasmic. A helical transmembrane segment spans residues 60-77 (VAQVLLTLPYSFSQLGML). Residues 78–79 (SG) are Extracellular-facing. A helical transmembrane segment spans residues 80 to 100 (ILLQVFYGILGSWTAYLISVL). Topologically, residues 101–135 (YVEYRSRKEKENVNFKNHVIQWFEVLDGLLGPYWK) are cytoplasmic. A helical transmembrane segment spans residues 136–156 (ALGLAFNCTFLLFGSVIQLIA). Topologically, residues 157–172 (CASNIYYINDNLDKRT) are extracellular. A helical transmembrane segment spans residues 173–193 (WTYIFGACCATTVFIPSFHNY). The Cytoplasmic segment spans residues 194–196 (RIW). Residues 197–217 (SFLGLGMTTYTAWYLTIASIV) form a helical membrane-spanning segment. The Extracellular segment spans residues 218 to 232 (HGQAENVTHTGPKKL). Asn223 carries an N-linked (GlcNAc...) asparagine glycan. The helical transmembrane segment at 233 to 253 (VLYFTGATNILYTFGGHAVTV) threads the bilayer. Residues 254-266 (EIMHAMWKPQKFK) are Cytoplasmic-facing. The chain crosses the membrane as a helical span at residues 267–287 (YIYLMATLYVFTLTIPSATAV). The Extracellular segment spans residues 288-314 (YWAFGDELLNHSNAFSLLPKNGWRDGA). Residue Asn297 is glycosylated (N-linked (GlcNAc...) asparagine). The chain crosses the membrane as a helical span at residues 315–335 (VILMLIHQFITFGFACTPLYF). Topologically, residues 336-356 (VWEKVIGMHDTRSICLRALAR) are cytoplasmic. The chain crosses the membrane as a helical span at residues 357–377 (LPVVIPIWFLAIIFPFFGPIN). Position 378 (Ser378) is a topological domain, extracellular. Residues 379–399 (AVGALLVSFTVYIIPSAAHML) form a helical membrane-spanning segment. The Cytoplasmic portion of the chain corresponds to 400–425 (TYRKASARKNAAEKPPFFMPSWTAMY). Residues 426–446 (IFNAFIVIWVLVVGFGFGGWA) form a helical membrane-spanning segment. The Extracellular segment spans residues 447-484 (SMTNFIRQIDTFGLFAKCYQCKPPPVMAAAPPPHALHH).

This sequence belongs to the amino acid/polyamine transporter 2 family. Amino acid/auxin permease (AAAP) (TC 2.A.18.1) subfamily. Shoots and roots of nodulating plants. Higher levels in roots, flowers and stems, lower in nodules, leaves, petioles and shoot apices.

It localises to the cell membrane. In terms of biological role, carrier protein involved in proton-driven auxin influx. Mediates the formation of auxin gradient from developing leaves (site of auxin biosynthesis) to tips by contributing to the loading of auxin in vascular tissues and facilitating acropetal (base to tip) auxin transport within inner tissues of the root apex, and basipetal (tip to base) auxin transport within outer tissues of the root apex. May be involved in lateral roots and nodules formation. The chain is Auxin transporter-like protein 2 (LAX2) from Medicago truncatula (Barrel medic).